Here is a 792-residue protein sequence, read N- to C-terminus: LPS-assembly protein LptD (792 aa).

The signal sequence occupies residues 1-22 (MYRVLRLLPLPLSVAISLSALA).

It belongs to the LptD family. In terms of assembly, component of the lipopolysaccharide transport and assembly complex. Interacts with LptE and LptA.

The protein localises to the cell outer membrane. In terms of biological role, together with LptE, is involved in the assembly of lipopolysaccharide (LPS) at the surface of the outer membrane. The protein is LPS-assembly protein LptD of Xylella fastidiosa (strain 9a5c).